Consider the following 164-residue polypeptide: Protein-export protein SecB (164 aa).

This sequence belongs to the SecB family. Homotetramer, a dimer of dimers. One homotetramer interacts with 1 SecA dimer.

The protein localises to the cytoplasm. Functionally, one of the proteins required for the normal export of preproteins out of the cell cytoplasm. It is a molecular chaperone that binds to a subset of precursor proteins, maintaining them in a translocation-competent state. It also specifically binds to its receptor SecA. The sequence is that of Protein-export protein SecB from Chromohalobacter salexigens (strain ATCC BAA-138 / DSM 3043 / CIP 106854 / NCIMB 13768 / 1H11).